A 749-amino-acid polypeptide reads, in one-letter code: MTIKPAVRISDGNLIIKNRTILTGVPDNVITTSASEAGPVEGVFVGAVFNKEESKHIVPIGTLRNSRFMSCFRFKLWWMAQRMGEMGRDIPYETQFLLVESNDGSHLESDGANGVECNQKVYTVFLPLIEGSFRSCLQGNVNDEVELCLESGDVDTKRSSFTHSLYIHAGTDPFQTITDAIRTVKLHLNSFRQRHEKKLPGIVDYFGWCTWDAFYQEVTQEGVEAGLKSLAAGGTPPKFVIIDDGWQSVERDATVEAGDEKKESPIFRLTGIKENEKFKKKDDPNVGIKNIVKIAKEKHGLKYVYVWHAITGYWGGVRPGEEYGSVMKYPNMSKGVVENDPTWKTDVMTLQGLGLVSPKKVYKFYNELHSYLADAGVDGVKVDVQCVLETLGGGLGGRVELTRQFHQALDSSVAKNFPDNGCIACMSHNTDALYCSKQAAVIRASDDFYPRDPVSHTIHIASVAYNSVFLGEFMQPDWDMFHSVHPAAEYHASARAISGGPLYVSDSPGKHNFELLRKLVLPDGSILRARLPGRPTRDCLFADPARDGVSLLKIWNMNKYTGVLGVYNCQGAAWSSTERKNIFHQTKTDSLTGSIRGRDVHSISEASTDPTTWNGDCAVYSQSRGELIVMPYNVSLPVSLKIREHEIFTVSPISHLVDGVSFAPIGLVNMYNSGGAIEGLRYEAEKMKVVMEVKGCGKFGSYSSVKPKRCVVESNEIAFEYDSSSGLVTFELDKMPIENKRFHLIQVEL.

This sequence belongs to the glycosyl hydrolases 36 family.

The catalysed reaction is alpha-D-galactosyl-(1-&gt;3)-1D-myo-inositol + sucrose = raffinose + myo-inositol. Its function is as follows. Transglycosidase operating by a ping-pong reaction mechanism. Involved in the synthesis of raffinose, a major soluble carbohydrate in seeds, roots and tubers. This chain is Probable galactinol--sucrose galactosyltransferase 6 (RFS6), found in Arabidopsis thaliana (Mouse-ear cress).